Reading from the N-terminus, the 668-residue chain is Protein ENTREP3 (668 aa).

Transmembrane regions (helical) follow at residues 34-54 (LLTLGLVQVLLGILVVTFSMV), 67-87 (SCPSWAGFSLAFSGVVGIVSW), and 91-111 (FTLVISFFSLLSVLCVMLSMA). N-linked (GlcNAc...) asparagine glycosylation occurs at N160. The helical transmembrane segment at 174–194 (LFSVCGLTICAAIICTLSAIV) threads the bilayer. Residues S358 and S389 each carry the phosphoserine modification. 3 disordered regions span residues 386-419 (FEESPLPRRPPRAARSYSCSAPEAPPPLGAPTAA), 442-503 (RVPR…SSDT), and 550-570 (SAEKRRPVPTFQKVPLPSGPA). Over residues 398 to 407 (AARSYSCSAP) the composition is skewed to low complexity. At S493 the chain carries Phosphoserine. S574 bears the Phosphoserine mark. 2 disordered regions span residues 597–620 (KAPDPSGTGAHGHKQVPRSLWGRP) and 645–668 (GRRLERGTRPHSLSLNGGSRETGL). Polar residues predominate over residues 655–668 (HSLSLNGGSRETGL).

This sequence belongs to the ENTREP family. As to quaternary structure, may interact with WWOX. As to expression, widely expressed.

The protein resides in the membrane. This is Protein ENTREP3 from Homo sapiens (Human).